Consider the following 564-residue polypeptide: E3 ubiquitin-protein ligase RNF168 (564 aa).

The segment at 16 to 55 (CGICMEILVEPVTLPCNHTLCNPCFQSTVEKANLCCPFCR) adopts an RING-type zinc-finger fold. Ser70 is subject to Phosphoserine. Residues 110 to 128 (LSKPGELRREYEEEISKVE) carry the LR motif 1 motif. Ser134 is subject to Phosphoserine. Residues 143-151 (EEYIQRLLA) carry the UMI motif motif. Disordered stretches follow at residues 149–179 (LLAEEEEEEKRRTERRRSEMEEQLRGDEELA) and 193–291 (NILA…QGPE). Residues 157–179 (EKRRTERRRSEMEEQLRGDEELA) are compositionally biased toward basic and acidic residues. Residues 168-191 (MEEQLRGDEELARRLSTSINSNYE) carry the MIU motif 1 motif. Position 197 is a phosphoserine (Ser197). A Glycyl lysine isopeptide (Lys-Gly) (interchain with G-Cter in SUMO2) cross-link involves residue Lys210. A compositionally biased stretch (basic and acidic residues) spans 242-259 (KTEHGEDMCKSKETDSSD). A compositionally biased stretch (polar residues) spans 275 to 288 (PTHSPQTCPETQGQ). A phosphothreonine mark is found at Thr348 and Thr361. A phosphoserine mark is found at Ser413 and Ser414. The MIU motif 2 signature appears at 438–461 (RHKQEEQDRLLALQLQKEADKEKM). A disordered region spans residues 455-564 (EADKEKMVPN…QKSILQMFQR (110 aa)). The LR motif 2 motif lies at 465–476 (RQKGSPDQYQLR). A compositionally biased stretch (polar residues) spans 466-480 (QKGSPDQYQLRTSSP). Ser469 carries the post-translational modification Phosphoserine. Residues 491–515 (NVKDRNSPKQTADRSKSQRSRKGEY) show a composition bias toward basic and acidic residues. Composition is skewed to polar residues over residues 519-531 (FESTWKGSVNGTK) and 555-564 (QKSILQMFQR). Residue Lys524 forms a Glycyl lysine isopeptide (Lys-Gly) (interchain with G-Cter in SUMO2) linkage.

It belongs to the RNF168 family. In terms of assembly, monomer. Interacts with UBE2N/UBC13. Post-translationally, sumoylated with SUMO1 by PIAS4 in response to double-strand breaks (DSBs). Ubiquitinated.

The protein resides in the nucleus. The enzyme catalyses S-ubiquitinyl-[E2 ubiquitin-conjugating enzyme]-L-cysteine + [acceptor protein]-L-lysine = [E2 ubiquitin-conjugating enzyme]-L-cysteine + N(6)-ubiquitinyl-[acceptor protein]-L-lysine.. The protein operates within protein modification; protein ubiquitination. Its function is as follows. E3 ubiquitin-protein ligase required for accumulation of repair proteins to sites of DNA damage. Acts with UBE2N/UBC13 to amplify the RNF8-dependent histone ubiquitination. Recruited to sites of DNA damage at double-strand breaks (DSBs) by binding to ubiquitinated histone H2A and H2AX and amplifies the RNF8-dependent H2A ubiquitination, promoting the formation of 'Lys-63'-linked ubiquitin conjugates. This leads to concentrate ubiquitinated histones H2A and H2AX at DNA lesions to the threshold required for recruitment of TP53BP1 and BRCA1. Also recruited at DNA interstrand cross-links (ICLs) sites and promotes accumulation of 'Lys-63'-linked ubiquitination of histones H2A and H2AX, leading to recruitment of FAAP20 and Fanconi anemia (FA) complex, followed by interstrand cross-link repair. H2A ubiquitination also mediates the ATM-dependent transcriptional silencing at regions flanking DSBs in cis, a mechanism to avoid collision between transcription and repair intermediates. Also involved in class switch recombination in immune system, via its role in regulation of DSBs repair. Following DNA damage, promotes the ubiquitination and degradation of JMJD2A/KDM4A in collaboration with RNF8, leading to unmask H4K20me2 mark and promote the recruitment of TP53BP1 at DNA damage sites. Not able to initiate 'Lys-63'-linked ubiquitination in vitro; possibly due to partial occlusion of the UBE2N/UBC13-binding region. Catalyzes monoubiquitination of 'Lys-13' and 'Lys-15' of nucleosomal histone H2A (H2AK13Ub and H2AK15Ub, respectively). The polypeptide is E3 ubiquitin-protein ligase RNF168 (Rattus norvegicus (Rat)).